A 274-amino-acid polypeptide reads, in one-letter code: 2-dehydro-3-deoxyphosphooctonate aldolase (274 aa).

Belongs to the KdsA family.

It is found in the cytoplasm. The catalysed reaction is D-arabinose 5-phosphate + phosphoenolpyruvate + H2O = 3-deoxy-alpha-D-manno-2-octulosonate-8-phosphate + phosphate. Its pathway is carbohydrate biosynthesis; 3-deoxy-D-manno-octulosonate biosynthesis; 3-deoxy-D-manno-octulosonate from D-ribulose 5-phosphate: step 2/3. It participates in bacterial outer membrane biogenesis; lipopolysaccharide biosynthesis. This Legionella pneumophila (strain Lens) protein is 2-dehydro-3-deoxyphosphooctonate aldolase.